We begin with the raw amino-acid sequence, 224 residues long: Ribose-5-phosphate isomerase A (224 aa).

Residues 34–37 (TGST), 87–90 (DGAD), and 100–103 (KGGG) contribute to the substrate site. Glutamate 109 (proton acceptor) is an active-site residue. Lysine 127 provides a ligand contact to substrate.

It belongs to the ribose 5-phosphate isomerase family. In terms of assembly, homodimer.

The catalysed reaction is aldehydo-D-ribose 5-phosphate = D-ribulose 5-phosphate. It participates in carbohydrate degradation; pentose phosphate pathway; D-ribose 5-phosphate from D-ribulose 5-phosphate (non-oxidative stage): step 1/1. In terms of biological role, catalyzes the reversible conversion of ribose-5-phosphate to ribulose 5-phosphate. The chain is Ribose-5-phosphate isomerase A from Francisella tularensis subsp. novicida (strain U112).